The following is a 265-amino-acid chain: Synaptoporin (265 aa).

Residues 1–4 lie on the Cytoplasmic side of the membrane; that stretch reads MCMV. In terms of domain architecture, MARVEL spans 1–202; the sequence is MCMVIFAPLF…NIWFVFKETG (202 aa). Residues 5-25 form a helical membrane-spanning segment; the sequence is IFAPLFAIFAFATCGGYSGGL. The Vesicular portion of the chain corresponds to 26-81; that stretch reads RLSVDCVNKTESNLSIDIAFAYPFRLHQVTFEVPTCEGKERQKLALVGDSSSSAEF. Residues Asn33 and Asn38 are each glycosylated (N-linked (GlcNAc...) asparagine). Residues 82–102 form a helical membrane-spanning segment; sequence FVTVAVFAFLYSLAATVVYIF. At 103-114 the chain is on the cytoplasmic side; that stretch reads FQNKYRENNRGP. The helical transmembrane segment at 115 to 135 threads the bilayer; the sequence is LIDFIVTVVFSFLWLVGSSAW. The Vesicular portion of the chain corresponds to 136–177; the sequence is AKGLSDVKVATDPKEVLLLMSACKQPSNKCMAVHSPVMSSLN. Asn177 is a glycosylation site (N-linked (GlcNAc...) asparagine). The chain crosses the membrane as a helical span at residues 178–198; it reads TSVVFGFLNFILWAGNIWFVF. Residues 199–265 lie on the Cytoplasmic side of the membrane; sequence KETGWHSSGQ…SGPTSFNNQI (67 aa). Repeat 1 spans residues 210-214; the sequence is YLSDP. Residues 210–242 form a 5 X approximate repeats region; the sequence is YLSDPMEKHSSSYNQGGYNQDSYGSSGGYSQQA. Residues Ser212 and Ser220 each carry the phosphoserine modification. The disordered stretch occupies residues 221–265; the sequence is SYNQGGYNQDSYGSSGGYSQQASLGPTSDEFGQQPSGPTSFNNQI. 4 repeat units span residues 222–226, 227–231, 232–236, and 238–242. Residues 224 to 243 show a composition bias toward low complexity; it reads QGGYNQDSYGSSGGYSQQAS. Over residues 244 to 265 the composition is skewed to polar residues; it reads LGPTSDEFGQQPSGPTSFNNQI.

This sequence belongs to the synaptophysin/synaptobrevin family. Central nervous system.

It is found in the cytoplasmic vesicle. The protein localises to the secretory vesicle. Its subcellular location is the synaptic vesicle membrane. The protein resides in the synapse. It localises to the synaptosome. Functionally, intrinsic membrane protein of small synaptic vesicles. Probable vesicular channel protein. This is Synaptoporin (Synpr) from Rattus norvegicus (Rat).